A 324-amino-acid polypeptide reads, in one-letter code: Ribose-phosphate pyrophosphokinase (324 aa).

ATP is bound by residues 45–47 (NGE) and 104–105 (RQ). Mg(2+)-binding residues include histidine 138 and aspartate 178. Lysine 201 is an active-site residue. D-ribose 5-phosphate-binding positions include arginine 203, aspartate 229, and 233–237 (DTGGT).

Belongs to the ribose-phosphate pyrophosphokinase family. Class I subfamily. As to quaternary structure, homohexamer. Mg(2+) is required as a cofactor.

It localises to the cytoplasm. The catalysed reaction is D-ribose 5-phosphate + ATP = 5-phospho-alpha-D-ribose 1-diphosphate + AMP + H(+). It functions in the pathway metabolic intermediate biosynthesis; 5-phospho-alpha-D-ribose 1-diphosphate biosynthesis; 5-phospho-alpha-D-ribose 1-diphosphate from D-ribose 5-phosphate (route I): step 1/1. Functionally, involved in the biosynthesis of the central metabolite phospho-alpha-D-ribosyl-1-pyrophosphate (PRPP) via the transfer of pyrophosphoryl group from ATP to 1-hydroxyl of ribose-5-phosphate (Rib-5-P). The sequence is that of Ribose-phosphate pyrophosphokinase from Streptomyces avermitilis (strain ATCC 31267 / DSM 46492 / JCM 5070 / NBRC 14893 / NCIMB 12804 / NRRL 8165 / MA-4680).